The following is a 196-amino-acid chain: MEFVVKETDGDTLYKLVLGLVVPRPIGWVSTISKDGILNIAPFSFFNVVNDEPPVLMISVSNRDDNTLKDTVKNVLDTKEFVVNMVSEEVFEKMLITGEEFPPEVNEFEKAGLTPETSKFVKAPRIKEAKVSFECKLYKYVPVYDMHVIFGEALLIKVEDTILDENLNVNYEKYRPIGRLGGKYYVKAFGECKLKV.

The protein belongs to the flavoredoxin family. The cofactor is FMN.

This is an uncharacterized protein from Aquifex aeolicus (strain VF5).